Here is a 386-residue protein sequence, read N- to C-terminus: Hydrazine synthase subunit beta (386 aa).

The first 34 residues, Met-1–Ala-34, serve as a signal peptide directing secretion.

Part of the hydrazine synthase complex that forms an elongated dimer of heterotrimers composed of one alpha, one beta and one gamma subunit.

The protein resides in the anammoxosome. It participates in nitrogen metabolism. Its function is as follows. Component of the hydrazine synthase complex that catalyzes the condensation of nitric oxide (NO) with ammonium to form hydrazine. The beta subunit may play a role in modulating transport of the hydroxylamine intermediate through a tunnel between the gamma and alpha subunit's active site. Is involved in anaerobic ammonium oxidation (anammox), a biological process in which nitrite is used as the electron acceptor in the conversion of ammonium to dinitrogen gas (N2) and water; this bacterial process has a major role in the Earth's nitrogen cycle and has been estimated to synthesize up to 50% of the dinitrogen gas emitted into our atmosphere from the oceans. The protein is Hydrazine synthase subunit beta of Kuenenia stuttgartiensis.